The sequence spans 343 residues: Heat-inducible transcription repressor HrcA (343 aa).

It belongs to the HrcA family.

Its function is as follows. Negative regulator of class I heat shock genes (grpE-dnaK-dnaJ and groELS operons). Prevents heat-shock induction of these operons. This Mycolicibacterium vanbaalenii (strain DSM 7251 / JCM 13017 / BCRC 16820 / KCTC 9966 / NRRL B-24157 / PYR-1) (Mycobacterium vanbaalenii) protein is Heat-inducible transcription repressor HrcA.